A 951-amino-acid polypeptide reads, in one-letter code: Replication protein A 70 kDa DNA-binding subunit C (951 aa).

Residues A139 to G172 form a disordered region. Residues W320–T403 constitute a DNA-binding region (OB). Residues C612–C639 form a C4-type zinc finger.

The protein belongs to the replication factor A protein 1 family. As to quaternary structure, heterotrimer of RPA1, RPA2 and RPA3 (canonical replication protein A complex). Interacts with RPA2C.

The protein localises to the nucleus. Functionally, component of the replication protein A complex (RPA) required for DNA recombination, repair and replication. The activity of RPA is mediated by single-stranded DNA binding and protein interactions. Probably involved in repair of double-strand DNA breaks (DSBs) induced by genotoxic stresses. This is Replication protein A 70 kDa DNA-binding subunit C (RPA1C) from Oryza sativa subsp. japonica (Rice).